Consider the following 946-residue polypeptide: Bifunctional lysine-specific demethylase and histidyl-hydroxylase NO66 (946 aa).

Residues 14-435 (YRGSATSKNY…TSAASKKNTV (422 aa)) are disordered. Composition is skewed to polar residues over residues 17–28 (SATSKNYVQKGT) and 37–46 (AKNNNRNLAS). Over residues 59–73 (SGSYSDGDNGSSSSS) the composition is skewed to low complexity. Over residues 99–110 (TLNNHSSQSSPE) the composition is skewed to polar residues. The span at 117 to 128 (ESLKRRNDEAEG) shows a compositional bias: basic and acidic residues. Over residues 169–186 (TLNSHSSQSSPETPANTR) the composition is skewed to polar residues. Positions 187–198 (ESLKRRTDEAEG) are enriched in basic and acidic residues. Residues 239–256 (TLNSHSYQSSPETPANTR) show a composition bias toward polar residues. Residues 257–268 (ESLKRRTDEAEG) are compositionally biased toward basic and acidic residues. Thr-309 is modified (phosphothreonine). The span at 309 to 327 (TLNSHSSQSSPETPANTRE) shows a compositional bias: polar residues. The segment covering 328-338 (SLNRRNYEAEG) has biased composition (basic and acidic residues). At Ser-339 the chain carries Phosphoserine. Residues 379–397 (TLNSHSSQSSPETPANTRE) are compositionally biased toward polar residues. Residues 398 to 408 (SLNRRNYEAEG) show a composition bias toward basic and acidic residues. Residues 416 to 433 (RTSSTPVGQSTSAASKKN) are compositionally biased toward polar residues. The 137-residue stretch at 606-742 (NPSSYLVQLR…NLMEKLMPLV (137 aa)) folds into the JmjC domain. Residues His-646, Asp-648, and His-708 each coordinate Fe cation.

This sequence belongs to the ROX family. NO66 subfamily. Fe(2+) is required as a cofactor.

It localises to the nucleus. The catalysed reaction is N(6),N(6)-dimethyl-L-lysyl(36)-[histone H3] + 2 2-oxoglutarate + 2 O2 = L-lysyl(36)-[histone H3] + 2 formaldehyde + 2 succinate + 2 CO2. Its function is as follows. Oxygenase that can act as both a histone lysine demethylase and a ribosomal histidine hydroxylase. Specifically demethylates 'Lys-4' (H3K4me) and 'Lys-36' (H3K36me) of histone H3, thereby playing a central role in histone code. This Drosophila pseudoobscura pseudoobscura (Fruit fly) protein is Bifunctional lysine-specific demethylase and histidyl-hydroxylase NO66.